Reading from the N-terminus, the 154-residue chain is D-aminoacyl-tRNA deacylase (154 aa).

A Gly-cisPro motif, important for rejection of L-amino acids motif is present at residues 142–143 (GP).

Belongs to the DTD family. Homodimer.

It is found in the cytoplasm. The catalysed reaction is glycyl-tRNA(Ala) + H2O = tRNA(Ala) + glycine + H(+). It catalyses the reaction a D-aminoacyl-tRNA + H2O = a tRNA + a D-alpha-amino acid + H(+). An aminoacyl-tRNA editing enzyme that deacylates mischarged D-aminoacyl-tRNAs. Also deacylates mischarged glycyl-tRNA(Ala), protecting cells against glycine mischarging by AlaRS. Acts via tRNA-based rather than protein-based catalysis; rejects L-amino acids rather than detecting D-amino acids in the active site. By recycling D-aminoacyl-tRNA to D-amino acids and free tRNA molecules, this enzyme counteracts the toxicity associated with the formation of D-aminoacyl-tRNA entities in vivo and helps enforce protein L-homochirality. This is D-aminoacyl-tRNA deacylase from Polaromonas naphthalenivorans (strain CJ2).